We begin with the raw amino-acid sequence, 220 residues long: MAAATGTRKKKTPRPGQWKLWLLYTAGFVPAVWTFYLGATGQLGADPVKTFEHLLGLWALRFLILTLLVTPMRDLTGITLLRYRRALGLLAFYYALMHFTTYMVLDQGLNLSAIITDIVRRPFITIGMISLALLVPLALTSNNWSIRKLGRRWSSLHKLVYIAIAGSAVHFLMSVKSWPAEPVIYAAIVAALLLWRLARPYLRTRKPALRPRGEAIALRK.

The next 6 membrane-spanning stretches (helical) occupy residues 20–40 (LWLL…LGAT), 51–71 (FEHL…LVTP), 86–106 (ALGL…MVLD), 122–142 (PFIT…LTSN), 153–173 (WSSL…HFLM), and 175–195 (VKSW…LLLW).

The protein belongs to the MsrQ family. Heterodimer of a catalytic subunit (MsrP) and a heme-binding subunit (MsrQ). It depends on FMN as a cofactor. The cofactor is heme b.

It localises to the cell inner membrane. Part of the MsrPQ system that repairs oxidized periplasmic proteins containing methionine sulfoxide residues (Met-O), using respiratory chain electrons. Thus protects these proteins from oxidative-stress damage caused by reactive species of oxygen and chlorine generated by the host defense mechanisms. MsrPQ is essential for the maintenance of envelope integrity under bleach stress, rescuing a wide series of structurally unrelated periplasmic proteins from methionine oxidation. MsrQ provides electrons for reduction to the reductase catalytic subunit MsrP, using the quinone pool of the respiratory chain. The protein is Protein-methionine-sulfoxide reductase heme-binding subunit MsrQ of Brucella melitensis biotype 2 (strain ATCC 23457).